Consider the following 240-residue polypeptide: Small ribosomal subunit protein uS3 (240 aa).

Residues 39 to 109 (IRQYIEKTLN…QIRVNVIEVP (71 aa)) form the KH type-2 domain. A disordered region spans residues 219–240 (APPSQPRRKSRRQQFDDRSQDG). The segment covering 231–240 (QQFDDRSQDG) has biased composition (basic and acidic residues).

Belongs to the universal ribosomal protein uS3 family. In terms of assembly, part of the 30S ribosomal subunit. Forms a tight complex with proteins S10 and S14.

Its function is as follows. Binds the lower part of the 30S subunit head. Binds mRNA in the 70S ribosome, positioning it for translation. In Synechocystis sp. (strain ATCC 27184 / PCC 6803 / Kazusa), this protein is Small ribosomal subunit protein uS3.